A 519-amino-acid polypeptide reads, in one-letter code: Sensory neuron membrane protein 2 (519 aa).

Topologically, residues 1–7 (MLAKHSK) are cytoplasmic. A helical transmembrane segment spans residues 8–28 (LFFTGSVVFLIVAIVLASWGF). Residues 29 to 469 (PKIISTRIQK…DAHALLSYAQ (441 aa)) are Extracellular-facing. 7 N-linked (GlcNAc...) asparagine glycosylation sites follow: N44, N67, N104, N166, N229, N272, and N314. 3 cysteine pairs are disulfide-bonded: C268–C338, C299–C362, and C340–C351. Residues 470–490 (LARWIILAAAIILAIIATITV) traverse the membrane as a helical segment. Over 491-519 (ARSTSLISWPRNSNSVNFIIGPMVNDKMR) the chain is Cytoplasmic.

This sequence belongs to the CD36 family. As to expression, localizes to both male and female antennae but not the leg, wing, gut, head or thoracic ganglia. Detected throughout the sensory epithelium, associating with both sex-pheromone sensilla and plant-volatile sensilla. Differentially expressed among different sensilla and different neurons within a given sensillum.

It localises to the cell membrane. Its function is as follows. Plays an olfactory role that is not restricted to pheromone sensitivity. This is Sensory neuron membrane protein 2 from Manduca sexta (Tobacco hawkmoth).